The following is a 299-amino-acid chain: Tricarboxylate transport protein (299 aa).

Solcar repeat units follow at residues 10 to 97 (VDPL…IKDM), 109 to 199 (TRGV…IKTL), and 212 to 297 (LSSG…VLVM). 6 consecutive transmembrane segments (helical) span residues 16–36 (FLAG…FEFA), 66–86 (IGSI…KAGI), 113–133 (IAGL…FEAI), 174–193 (GVLP…LGCY), 215–235 (GLTF…TMPL), and 272–291 (GATP…FTIY).

It belongs to the mitochondrial carrier (TC 2.A.29) family.

The protein resides in the mitochondrion inner membrane. Transport of citrate across inner mitochondrial membrane. The chain is Tricarboxylate transport protein (CTP1) from Saccharomyces cerevisiae (strain ATCC 204508 / S288c) (Baker's yeast).